The primary structure comprises 435 residues: tRNA modification GTPase MnmE (435 aa).

Residues Arg-24, Glu-82, and Lys-122 each contribute to the (6S)-5-formyl-5,6,7,8-tetrahydrofolate site. The 142-residue stretch at 219 to 360 folds into the TrmE-type G domain; sequence GFIIAIAGPP…LIAEMERRLG (142 aa). Asn-229 is a binding site for K(+). Residues 229–234, 248–254, and 273–276 each bind GTP; these read NAGKST, SPVPGTT, and DTAG. A Mg(2+)-binding site is contributed by Ser-233. The K(+) site is built by Ser-248, Val-250, and Thr-253. Thr-254 lines the Mg(2+) pocket. Lys-435 contributes to the (6S)-5-formyl-5,6,7,8-tetrahydrofolate binding site.

This sequence belongs to the TRAFAC class TrmE-Era-EngA-EngB-Septin-like GTPase superfamily. TrmE GTPase family. In terms of assembly, homodimer. Heterotetramer of two MnmE and two MnmG subunits. K(+) is required as a cofactor.

It is found in the cytoplasm. Functionally, exhibits a very high intrinsic GTPase hydrolysis rate. Involved in the addition of a carboxymethylaminomethyl (cmnm) group at the wobble position (U34) of certain tRNAs, forming tRNA-cmnm(5)s(2)U34. This Azorhizobium caulinodans (strain ATCC 43989 / DSM 5975 / JCM 20966 / LMG 6465 / NBRC 14845 / NCIMB 13405 / ORS 571) protein is tRNA modification GTPase MnmE.